The following is a 476-amino-acid chain: Serine/threonine-protein kinase sax-1 (476 aa).

Residues 87 to 381 (FESLKVIGRG…LDEIKQCPFV (295 aa)) enclose the Protein kinase domain. Residues 93–101 (IGRGAFGEV) and lysine 116 each bind ATP. The active-site Proton acceptor is the aspartate 210. The region spanning 382 to 452 (KRIDWNHIRE…KRFDGLTQKM (71 aa)) is the AGC-kinase C-terminal domain.

This sequence belongs to the protein kinase superfamily. AGC Ser/Thr protein kinase family. Mg(2+) is required as a cofactor. In terms of tissue distribution, widely expressed in embryonic and larval neurons that contribute axons to the nerve ring and in hypodermal cells, including lateral seam cells. Also displays a punctate localization in muscle.

The protein localises to the cytoplasm. Its subcellular location is the nucleus. It carries out the reaction L-seryl-[protein] + ATP = O-phospho-L-seryl-[protein] + ADP + H(+). It catalyses the reaction L-threonyl-[protein] + ATP = O-phospho-L-threonyl-[protein] + ADP + H(+). In terms of biological role, acts with sax-2 to restrict the growth of both primary and secondary neurites. Regulates mechanosensory tiling by controlling the termination point of sensory dendrites. In Caenorhabditis elegans, this protein is Serine/threonine-protein kinase sax-1.